We begin with the raw amino-acid sequence, 287 residues long: Large ribosomal subunit protein uL2 (287 aa).

Residues 221–287 (RGSVMNPCDH…SKRSRGGRDS (67 aa)) are disordered. Positions 258–287 (KTRKRNKPSNRFVLRKRRRTSKRSRGGRDS) are enriched in basic residues.

This sequence belongs to the universal ribosomal protein uL2 family. In terms of assembly, part of the 50S ribosomal subunit. Forms a bridge to the 30S subunit in the 70S ribosome.

In terms of biological role, one of the primary rRNA binding proteins. Required for association of the 30S and 50S subunits to form the 70S ribosome, for tRNA binding and peptide bond formation. It has been suggested to have peptidyltransferase activity; this is somewhat controversial. Makes several contacts with the 16S rRNA in the 70S ribosome. The protein is Large ribosomal subunit protein uL2 of Prochlorococcus marinus (strain MIT 9313).